The chain runs to 152 residues: Large ribosomal subunit protein uL15 (152 aa).

The segment at 1 to 57 (MTSTLNTLKSNSGSRKKKLRKGRGIAAGQGASCGFGMRGQKSRSGRPTRPGFEGGQM) is disordered. Over residues 14–23 (SRKKKLRKGR) the composition is skewed to basic residues. Residues 25–37 (IAAGQGASCGFGM) are compositionally biased toward gly residues.

The protein belongs to the universal ribosomal protein uL15 family. As to quaternary structure, part of the 50S ribosomal subunit.

Functionally, binds to the 23S rRNA. The protein is Large ribosomal subunit protein uL15 of Prochlorococcus marinus (strain MIT 9215).